We begin with the raw amino-acid sequence, 727 residues long: Pre-B-cell leukemia transcription factor-interacting protein 1 (727 aa).

Polar residues predominate over residues 1-10 (MASCPDSDNS). A disordered region spans residues 1–135 (MASCPDSDNS…SPHRSLPSSP (135 aa)). Positions 39 to 53 (RAPQSPSRAAAEESA) are enriched in low complexity. Phosphoserine is present on S43. Over residues 61 to 70 (TVSQNESSKS) the composition is skewed to polar residues. Phosphoserine is present on residues S130, S134, S147, S148, and S149. A Phosphothreonine modification is found at T153. Coiled-coil stretches lie at residues 269-353 (QNMA…QGAD) and 380-421 (SPGF…SLKE). The Nuclear localization signal motif lies at 488–506 (WKTEHWKHKKEASGREKSW). 2 disordered regions span residues 491-568 (EHWK…AKDR) and 701-727 (KRSGKKDKHLQNRVVGPREEHSPHRQG). Composition is skewed to basic and acidic residues over residues 498–544 (EASG…EPPR), 551–568 (PSGERQKHPRWKEGAKDR), and 716–727 (GPREEHSPHRQG). The Nuclear localization signal motif lies at 696–719 (DKALKKRSGKKDKHLQNRVVGPRE).

As to quaternary structure, interacts with ESR1, PBX1, PBX2 and PBX3. Interacts with TEX11.

The protein localises to the cytoplasm. It is found in the cytoskeleton. The protein resides in the nucleus. In terms of biological role, regulator of pre-B-cell leukemia transcription factors (BPXs) function. Inhibits the binding of PBX1-HOX complex to DNA and blocks the transcriptional activity of E2A-PBX1. Tethers estrogen receptor-alpha (ESR1) to microtubules and allows them to influence estrogen receptors-alpha signaling. The chain is Pre-B-cell leukemia transcription factor-interacting protein 1 (PBXIP1) from Bos taurus (Bovine).